The following is a 140-amino-acid chain: Phospholipase A2 (140 aa).

The signal sequence occupies residues 1–21 (MNPAHLLVLAAVCISLSGASS). A propeptide spanning residues 22-27 (IAPQPL) is cleaved from the precursor. 7 disulfides stabilise this stretch: cysteine 38/cysteine 97, cysteine 52/cysteine 139, cysteine 54/cysteine 70, cysteine 69/cysteine 125, cysteine 76/cysteine 118, cysteine 86/cysteine 111, and cysteine 104/cysteine 116. An N-linked (GlcNAc...) asparagine glycan is attached at asparagine 39. Residues tyrosine 53, glycine 55, and glycine 57 each coordinate Ca(2+). Histidine 73 is a catalytic residue. Aspartate 74 contributes to the Ca(2+) binding site. Asparagine 107 carries an N-linked (GlcNAc...) asparagine glycan. The active site involves aspartate 119.

This sequence belongs to the phospholipase A2 family. Group I subfamily. D49 sub-subfamily. Ca(2+) serves as cofactor. Expressed by the venom gland.

The protein localises to the secreted. It catalyses the reaction a 1,2-diacyl-sn-glycero-3-phosphocholine + H2O = a 1-acyl-sn-glycero-3-phosphocholine + a fatty acid + H(+). Its function is as follows. PLA2 catalyzes the calcium-dependent hydrolysis of the 2-acyl groups in 3-sn-phosphoglycerides. The protein is Phospholipase A2 of Micrurus altirostris (Uruguayan coral snake).